The sequence spans 786 residues: Tyrosine-protein kinase Btk (786 aa).

The tract at residues 1-23 (MMGTKHRNSHVNGSIKSSSSLRS) is disordered. Over residues 14–23 (SIKSSSSLRS) the composition is skewed to low complexity. In terms of domain architecture, PH spans 41 to 184 (DVVKSGSMVK…WIRAIRQVCE (144 aa)). The Btk-type zinc finger occupies 187–223 (NTPKSYRYHPGLWSGKKWSCCKGLSRTTFGCRAAAHW). Residues histidine 195, cysteine 206, cysteine 207, and cysteine 217 each coordinate Zn(2+). Residues 226–240 (ANNNPSNGSSPAQNS) show a composition bias toward low complexity. The disordered stretch occupies residues 226 to 301 (ANNNPSNGSS…TPTSLQPQSS (76 aa)). A compositionally biased stretch (polar residues) spans 241–260 (TRSISPNSSTTNSQFSLQHN). Residues 264–290 (SLGGGVGGGLGGGGSLGLGGGGGGGGS) are compositionally biased toward gly residues. A compositionally biased stretch (polar residues) spans 291–301 (CTPTSLQPQSS). One can recognise an SH3 domain in the interval 342-402 (HFVKLVVALY…PSNYVKPKAL (61 aa)). Residues 410–503 (WYVGDMSRQR…GLACRLKSSP (94 aa)) enclose the SH2 domain. The 254-residue stretch at 526 to 779 (LMLMEELGSG…FRVLMDQLAL (254 aa)) folds into the Protein kinase domain. Residues 532–540 (LGSGQFGVV) and lysine 554 contribute to the ATP site. Aspartate 647 functions as the Proton acceptor in the catalytic mechanism. The residue at position 677 (tyrosine 677) is a Phosphotyrosine; by autocatalysis.

It belongs to the protein kinase superfamily. Tyr protein kinase family. TEC subfamily. It depends on Zn(2+) as a cofactor. Ring canals in the egg chambers and imaginal disks of third-instar larvae.

It catalyses the reaction L-tyrosyl-[protein] + ATP = O-phospho-L-tyrosyl-[protein] + ADP + H(+). Its function is as follows. Required for proper ring canal development. Also required for the development of male genitalia and for adult survival. The polypeptide is Tyrosine-protein kinase Btk (Drosophila melanogaster (Fruit fly)).